A 439-amino-acid chain; its full sequence is Acyl-lipid (8-3)-desaturase (439 aa).

The 82-residue stretch at 7–88 (GRSAAREMTA…LPKLDASKVE (82 aa)) folds into the Cytochrome b5 heme-binding domain. 2 residues coordinate heme: histidine 40 and histidine 66. Residues 123–143 (IPHMIYRVVEIVALFALSFWL) form a helical membrane-spanning segment. A Histidine box-1 motif is present at residues 171–175 (HEMGH). A Histidine box-2 motif is present at residues 208 to 213 (HSKHHA). Transmembrane regions (helical) follow at residues 254–274 (AYLFAPVSCLLIGLGWTLYLH), 287–307 (FVWIFARYIGWFSLMGALGYS), and 312–332 (VGMYLCSFGLGCIYIFLQFAV). The Histidine box-3 signature appears at 376 to 380 (QIEHH).

This sequence belongs to the fatty acid desaturase type 1 family. Requires Fe(2+) as cofactor.

It is found in the membrane. It catalyses the reaction an (8Z,11Z,14Z)-icosatrienoyl-containing glycerolipid + 2 Fe(II)-[cytochrome b5] + O2 + 2 H(+) = (5Z,8Z,11Z,14Z)-eicosatetraenoyl-containing glycerolipid + 2 Fe(III)-[cytochrome b5] + 2 H2O. The catalysed reaction is an (8Z,11Z,14Z,17Z)-eicosatetraenoyl-containing glycerolipid + 2 Fe(II)-[cytochrome b5] + O2 + 2 H(+) = a (5Z,8Z,11Z,14Z,17Z)-eicosapentaenoyl-containing glycerolipid + 2 Fe(III)-[cytochrome b5] + 2 H2O. In terms of biological role, fatty acid desaturase that introduces a cis double bond at the 5-position in 20-carbon polyunsaturated fatty acids incorporated in a glycerolipid that contain a Delta(8) double bond. The protein is Acyl-lipid (8-3)-desaturase of Thraustochytrium sp.